Here is a 299-residue protein sequence, read N- to C-terminus: tRNA pseudouridine synthase B (299 aa).

The Nucleophile role is filled by aspartate 38.

The protein belongs to the pseudouridine synthase TruB family. Type 1 subfamily.

The catalysed reaction is uridine(55) in tRNA = pseudouridine(55) in tRNA. Functionally, responsible for synthesis of pseudouridine from uracil-55 in the psi GC loop of transfer RNAs. This is tRNA pseudouridine synthase B from Alkaliphilus oremlandii (strain OhILAs) (Clostridium oremlandii (strain OhILAs)).